A 494-amino-acid chain; its full sequence is Ribose import ATP-binding protein RbsA (494 aa).

ABC transporter domains follow at residues I3–S240 and S250–E494. Residue G35–S42 coordinates ATP.

It belongs to the ABC transporter superfamily. Ribose importer (TC 3.A.1.2.1) family. The complex is composed of an ATP-binding protein (RbsA), two transmembrane proteins (RbsC) and a solute-binding protein (RbsB).

The protein resides in the cell membrane. The catalysed reaction is D-ribose(out) + ATP + H2O = D-ribose(in) + ADP + phosphate + H(+). Its function is as follows. Part of the ABC transporter complex RbsABC involved in ribose import. Responsible for energy coupling to the transport system. The protein is Ribose import ATP-binding protein RbsA of Bacillus cereus (strain ZK / E33L).